The chain runs to 1336 residues: Putative botulinum-like toxin Wo (1336 aa).

The interval 1-476 (MDVLEMFDVN…VAGMQRMVSL (476 aa)) is has protease activity. H250 contributes to the Zn(2+) binding site. E251 is an active-site residue. Zn(2+) contacts are provided by H254 and E296.

Belongs to the peptidase M27 family. It depends on Zn(2+) as a cofactor.

It catalyses the reaction Limited hydrolysis of proteins of the neuroexocytosis apparatus, synaptobrevins, SNAP25 or syntaxin. No detected action on small molecule substrates.. With respect to regulation, inhibited by EDTA and 1,10-phenanthroline. In terms of biological role, when overexpressed the N-terminus (residues 1-476) cleaves rat synaptobrevin-2/VAMP2 between '89-Trp-|-Trp-90' in vitro. This releases the cytoplasmic domain of VAMP2 from the synaptic vesicle membrane, which would prevent the assembly of the trans-SNARE complex on the membrane and thus prevent vesicle-target membrane fusion and neurotransmitter release. This Weissella oryzae (strain DSM 25784 / JCM 18191 / LMG 30913 / SG25) protein is Putative botulinum-like toxin Wo.